We begin with the raw amino-acid sequence, 499 residues long: Hepatic triacylglycerol lipase (499 aa).

Positions Met-1–Thr-21 are cleaved as a signal peptide. A glycan (N-linked (GlcNAc...) asparagine) is linked at Asn-78. Residue Ser-168 is the Nucleophile of the active site. Residue Asp-194 is the Charge relay system of the active site. The interval Cys-254–Cys-277 is essential for determining substrate specificity. His-279 acts as the Charge relay system in catalysis. The PLAT domain maps to Tyr-352–Arg-486. N-linked (GlcNAc...) asparagine glycosylation is present at Asn-397.

It belongs to the AB hydrolase superfamily. Lipase family. As to quaternary structure, homodimer.

It localises to the secreted. It carries out the reaction a triacylglycerol + H2O = a diacylglycerol + a fatty acid + H(+). It catalyses the reaction a 1-acyl-sn-glycero-3-phosphocholine + H2O = sn-glycerol 3-phosphocholine + a fatty acid + H(+). The catalysed reaction is a 1,2-diacyl-sn-glycero-3-phosphocholine + H2O = a 2-acyl-sn-glycero-3-phosphocholine + a fatty acid + H(+). The enzyme catalyses 1,2,3-tri-(9Z-octadecenoyl)-glycerol + H2O = di-(9Z)-octadecenoylglycerol + (9Z)-octadecenoate + H(+). It carries out the reaction 1,2-di-(9Z-octadecenoyl)-sn-glycero-3-phosphocholine + H2O = (9Z-octadecenoyl)-sn-glycero-3-phosphocholine + (9Z)-octadecenoate + H(+). It catalyses the reaction 1,2,3-tributanoylglycerol + H2O = dibutanoylglycerol + butanoate + H(+). The catalysed reaction is 1,2-dihexadecanoyl-sn-glycero-3-phosphocholine + H2O = hexadecanoyl-sn-glycero-3-phosphocholine + hexadecanoate + H(+). The enzyme catalyses 1,2-di-(9Z-octadecenoyl)-sn-glycerol + H2O = 2-(9Z-octadecenoyl)-glycerol + (9Z)-octadecenoate + H(+). It carries out the reaction 1,2,3-tri-(9Z-octadecenoyl)-glycerol + H2O = 2,3-di-(9Z)-octadecenoyl-sn-glycerol + (9Z)-octadecenoate + H(+). It catalyses the reaction 1-(9Z-octadecenoyl)-sn-glycero-3-phospho-L-serine + H2O = sn-glycero-3-phospho-L-serine + (9Z)-octadecenoate + H(+). The catalysed reaction is 1-hexadecanoyl-sn-glycero-3-phosphocholine + H2O = sn-glycerol 3-phosphocholine + hexadecanoate + H(+). The enzyme catalyses 1,3-di-(9Z-octadecenoyl)-glycerol + H2O = 3-(9Z-octadecenoyl)-sn-glycerol + (9Z)-octadecenoate + H(+). Catalyzes the hydrolysis of triglycerides and phospholipids present in circulating plasma lipoproteins, including chylomicrons, intermediate density lipoproteins (IDL), low density lipoproteins (LDL) of large size and high density lipoproteins (HDL), releasing free fatty acids (FFA) and smaller lipoprotein particles. Also exhibits lysophospholipase activity. Can hydrolyze both neutral lipid and phospholipid substrates but shows a greater binding affinity for neutral lipid substrates than phospholipid substrates. In native LDL, preferentially hydrolyzes the phosphatidylcholine species containing polyunsaturated fatty acids at sn-2 position. The sequence is that of Hepatic triacylglycerol lipase (LIPC) from Oryctolagus cuniculus (Rabbit).